Consider the following 579-residue polypeptide: Arginine--tRNA ligase (579 aa).

The 'HIGH' region signature appears at 127-137; sequence ANPTGPLHVGH.

The protein belongs to the class-I aminoacyl-tRNA synthetase family. Monomer.

It is found in the cytoplasm. It carries out the reaction tRNA(Arg) + L-arginine + ATP = L-arginyl-tRNA(Arg) + AMP + diphosphate. The sequence is that of Arginine--tRNA ligase from Acidithiobacillus ferrooxidans (strain ATCC 23270 / DSM 14882 / CIP 104768 / NCIMB 8455) (Ferrobacillus ferrooxidans (strain ATCC 23270)).